The sequence spans 716 residues: Fatty acid oxidation complex subunit alpha (716 aa).

The enoyl-CoA hydratase/isomerase stretch occupies residues 1 to 189; that stretch reads MIYQSPTIQV…KVGAIDAVVA (189 aa). Aspartate 296 provides a ligand contact to substrate. Residues 311 to 716 form a 3-hydroxyacyl-CoA dehydrogenase region; it reads KDVNQAAVLG…AANNGSYYQA (406 aa). NAD(+) contacts are provided by residues methionine 324, aspartate 343, 400–402, lysine 407, and serine 429; that span reads VVE. Histidine 450 serves as the catalytic For 3-hydroxyacyl-CoA dehydrogenase activity. An NAD(+)-binding site is contributed by asparagine 453. Residues asparagine 500 and tyrosine 660 each coordinate substrate.

The protein in the N-terminal section; belongs to the enoyl-CoA hydratase/isomerase family. It in the C-terminal section; belongs to the 3-hydroxyacyl-CoA dehydrogenase family. As to quaternary structure, heterotetramer of two alpha chains (FadB) and two beta chains (FadA).

It catalyses the reaction a (3S)-3-hydroxyacyl-CoA + NAD(+) = a 3-oxoacyl-CoA + NADH + H(+). The catalysed reaction is a (3S)-3-hydroxyacyl-CoA = a (2E)-enoyl-CoA + H2O. The enzyme catalyses a 4-saturated-(3S)-3-hydroxyacyl-CoA = a (3E)-enoyl-CoA + H2O. It carries out the reaction (3S)-3-hydroxybutanoyl-CoA = (3R)-3-hydroxybutanoyl-CoA. It catalyses the reaction a (3Z)-enoyl-CoA = a 4-saturated (2E)-enoyl-CoA. The catalysed reaction is a (3E)-enoyl-CoA = a 4-saturated (2E)-enoyl-CoA. It participates in lipid metabolism; fatty acid beta-oxidation. Involved in the aerobic and anaerobic degradation of long-chain fatty acids via beta-oxidation cycle. Catalyzes the formation of 3-oxoacyl-CoA from enoyl-CoA via L-3-hydroxyacyl-CoA. It can also use D-3-hydroxyacyl-CoA and cis-3-enoyl-CoA as substrate. The sequence is that of Fatty acid oxidation complex subunit alpha from Shewanella frigidimarina (strain NCIMB 400).